A 122-amino-acid polypeptide reads, in one-letter code: MIFSNKNKIISRIRRSMKTRCKIKKLGAIRLVVHRTSRHMYAQIISSKEAKVLVFASTLERKINCSLKYTGNKEAAAKIGKIIAERALSKGISHVSFDRSGFKYHGRVQVLAESAREVGLKF.

This sequence belongs to the universal ribosomal protein uL18 family. In terms of assembly, part of the 50S ribosomal subunit; part of the 5S rRNA/L5/L18/L25 subcomplex. Contacts the 5S and 23S rRNAs.

This is one of the proteins that bind and probably mediate the attachment of the 5S RNA into the large ribosomal subunit, where it forms part of the central protuberance. The protein is Large ribosomal subunit protein uL18 of Buchnera aphidicola subsp. Acyrthosiphon pisum (strain 5A).